A 101-amino-acid chain; its full sequence is Protein Tat (101 aa).

The segment at 1-20 is disordered; that stretch reads MEVVDPNLDPWKHPGSQPET. Residues 1-24 are interaction with human CREBBP; sequence MEVVDPNLDPWKHPGSQPETPCNK. Residues 1–48 form a transactivation region; the sequence is MEVVDPNLDPWKHPGSQPETPCNKCYCKKCCFHCQLCFTRKGLGISYG. Positions 22, 25, and 27 each coordinate Zn(2+). The segment at 22-37 is cysteine-rich; that stretch reads CNKCYCKKCCFHCQLC. The residue at position 28 (Lys-28) is an N6-acetyllysine; by host PCAF. Residues Cys-30, His-33, Cys-34, and Cys-37 each contribute to the Zn(2+) site. The tract at residues 38 to 48 is core; it reads FTRKGLGISYG. The disordered stretch occupies residues 47–101; it reads YGRKKRRQRRRTPQSGEVHQDPVSKQPLSQTRGDPKGPEESKKKVESKTKTDPSD. Positions 48–58 are enriched in basic residues; sequence GRKKRRQRRRT. Positions 49–57 match the Nuclear localization signal, RNA-binding (TAR), and protein transduction motif; sequence RKKRRQRRR. Residues 49-86 are interaction with the host capping enzyme RNGTT; sequence RKKRRQRRRTPQSGEVHQDPVSKQPLSQTRGDPKGPEE. Residues Lys-50 and Lys-51 each carry the N6-acetyllysine; by host EP300 and GCN5L2 modification. Residues Arg-52 and Arg-53 each carry the asymmetric dimethylarginine; by host PRMT6 modification. Lys-71 is covalently cross-linked (Glycyl lysine isopeptide (Lys-Gly) (interchain with G-Cter in ubiquitin)). Residues 78 to 80 carry the Cell attachment site motif; that stretch reads RGD. Over residues 79–101 the composition is skewed to basic and acidic residues; the sequence is GDPKGPEESKKKVESKTKTDPSD.

It belongs to the lentiviruses Tat family. In terms of assembly, interacts with host CCNT1. Associates with the P-TEFb complex composed at least of Tat, P-TEFb (CDK9 and CCNT1), TAR RNA, RNA Pol II. Recruits the HATs CREBBP, TAF1/TFIID, EP300, PCAF and GCN5L2. Interacts with host KAT5/Tip60; this interaction targets the latter to degradation. Interacts with the host deacetylase SIRT1. Interacts with host capping enzyme RNGTT; this interaction stimulates RNGTT. Binds to host KDR, and to the host integrins ITGAV/ITGB3 and ITGA5/ITGB1. Interacts with host KPNB1/importin beta-1 without previous binding to KPNA1/importin alpha-1. Interacts with EIF2AK2. Interacts with host nucleosome assembly protein NAP1L1; this interaction may be required for the transport of Tat within the nucleus, since the two proteins interact at the nuclear rim. Interacts with host C1QBP/SF2P32; this interaction involves lysine-acetylated Tat. Interacts with the host chemokine receptors CCR2, CCR3 and CXCR4. Interacts with host DPP4/CD26; this interaction may trigger an anti-proliferative effect. Interacts with host LDLR. Interacts with the host extracellular matrix metalloproteinase MMP1. Interacts with host PRMT6; this interaction mediates Tat's methylation. Interacts with, and is ubiquitinated by MDM2/Hdm2. Interacts with host PSMC3 and HTATIP2. Interacts with STAB1; this interaction may overcome SATB1-mediated repression of IL2 and IL2RA (interleukin) in T cells by binding to the same domain than HDAC1. Interacts (when acetylated) with human CDK13, thereby increasing HIV-1 mRNA splicing and promoting the production of the doubly spliced HIV-1 protein Nef. Interacts with host TBP; this interaction modulates the activity of transcriptional pre-initiation complex. Interacts with host RELA. Interacts with host PLSCR1; this interaction negatively regulates Tat transactivation activity by altering its subcellular distribution. Asymmetrical arginine methylation by host PRMT6 seems to diminish the transactivation capacity of Tat and affects the interaction with host CCNT1. Post-translationally, acetylation by EP300, CREBBP, GCN5L2/GCN5 and PCAF regulates the transactivation activity of Tat. EP300-mediated acetylation of Lys-50 promotes dissociation of Tat from the TAR RNA through the competitive binding to PCAF's bromodomain. In addition, the non-acetylated Tat's N-terminus can also interact with PCAF. PCAF-mediated acetylation of Lys-28 enhances Tat's binding to CCNT1. Lys-50 is deacetylated by SIRT1. In terms of processing, polyubiquitination by host MDM2 does not target Tat to degradation, but activates its transactivation function and fosters interaction with CCNT1 and TAR RNA. Phosphorylated by EIF2AK2 on serine and threonine residues adjacent to the basic region important for TAR RNA binding and function. Phosphorylation of Tat by EIF2AK2 is dependent on the prior activation of EIF2AK2 by dsRNA.

It localises to the host nucleus. The protein localises to the host nucleolus. It is found in the host cytoplasm. Its subcellular location is the secreted. Transcriptional activator that increases RNA Pol II processivity, thereby increasing the level of full-length viral transcripts. Recognizes a hairpin structure at the 5'-LTR of the nascent viral mRNAs referred to as the transactivation responsive RNA element (TAR) and recruits the cyclin T1-CDK9 complex (P-TEFb complex) that will in turn hyperphosphorylate the RNA polymerase II to allow efficient elongation. The CDK9 component of P-TEFb and other Tat-activated kinases hyperphosphorylate the C-terminus of RNA Pol II that becomes stabilized and much more processive. Other factors such as HTATSF1/Tat-SF1, SUPT5H/SPT5, and HTATIP2 are also important for Tat's function. Besides its effect on RNA Pol II processivity, Tat induces chromatin remodeling of proviral genes by recruiting the histone acetyltransferases (HATs) CREBBP, EP300 and PCAF to the chromatin. This also contributes to the increase in proviral transcription rate, especially when the provirus integrates in transcriptionally silent region of the host genome. To ensure maximal activation of the LTR, Tat mediates nuclear translocation of NF-kappa-B by interacting with host RELA. Through its interaction with host TBP, Tat may also modulate transcription initiation. Tat can reactivate a latently infected cell by penetrating in it and transactivating its LTR promoter. In the cytoplasm, Tat is thought to act as a translational activator of HIV-1 mRNAs. Its function is as follows. Extracellular circulating Tat can be endocytosed by surrounding uninfected cells via the binding to several surface receptors such as CD26, CXCR4, heparan sulfate proteoglycans (HSPG) or LDLR. Neurons are rarely infected, but they internalize Tat via their LDLR. Through its interaction with nuclear HATs, Tat is potentially able to control the acetylation-dependent cellular gene expression. Modulates the expression of many cellular genes involved in cell survival, proliferation or in coding for cytokines or cytokine receptors. Tat plays a role in T-cell and neurons apoptosis. Tat induced neurotoxicity and apoptosis probably contribute to neuroAIDS. Circulating Tat also acts as a chemokine-like and/or growth factor-like molecule that binds to specific receptors on the surface of the cells, affecting many cellular pathways. In the vascular system, Tat binds to ITGAV/ITGB3 and ITGA5/ITGB1 integrins dimers at the surface of endothelial cells and competes with bFGF for heparin-binding sites, leading to an excess of soluble bFGF. The polypeptide is Protein Tat (Homo sapiens (Human)).